We begin with the raw amino-acid sequence, 347 residues long: D-alanine--D-alanine ligase (347 aa).

One can recognise an ATP-grasp domain in the interval 131–333 (KRVLESAGIA…YPELIERLVD (203 aa)). 161-216 (EEKLAYPVFTKPSNMGSSVGISKSENQEELRQALELAFRYDSRVLVEQGVNAREIE) lines the ATP pocket. Mg(2+) contacts are provided by D287, E300, and N302.

It belongs to the D-alanine--D-alanine ligase family. Requires Mg(2+) as cofactor. Mn(2+) serves as cofactor.

It is found in the cytoplasm. It carries out the reaction 2 D-alanine + ATP = D-alanyl-D-alanine + ADP + phosphate + H(+). It participates in cell wall biogenesis; peptidoglycan biosynthesis. Cell wall formation. This Streptococcus pneumoniae (strain CGSP14) protein is D-alanine--D-alanine ligase.